We begin with the raw amino-acid sequence, 148 residues long: DNA-directed RNA polymerase II subunit GRINL1A, isoforms 4/5 (148 aa).

Residues 1–66 (MATPARAPES…AEFGGAAGNV (66 aa)) are disordered. Over residues 53–66 (GLGAAEFGGAAGNV) the composition is skewed to low complexity.

The protein is DNA-directed RNA polymerase II subunit GRINL1A, isoforms 4/5 (POLR2M) of Homo sapiens (Human).